The sequence spans 457 residues: Multidrug resistance protein MdtK (457 aa).

12 consecutive transmembrane segments (helical) span residues 11–31 (LLAL…MGFV), 53–73 (IWLP…PVIA), 93–113 (WLAS…GYII), 127–147 (AVGY…FQVA), 160–180 (GMVM…IFIY), 188–208 (LGGI…FIAM), 243–263 (LPIA…ALLV), 276–296 (IALN…AAVT), 314–334 (AART…IFTV), 357–377 (LMLL…GSGI), 387–407 (IFFI…YILA), and 418–438 (PAGF…LMML).

The protein belongs to the multi antimicrobial extrusion (MATE) (TC 2.A.66.1) family. MdtK subfamily.

The protein localises to the cell inner membrane. Its function is as follows. Multidrug efflux pump that functions probably as a Na(+)/drug antiporter. This chain is Multidrug resistance protein MdtK, found in Salmonella arizonae (strain ATCC BAA-731 / CDC346-86 / RSK2980).